The sequence spans 233 residues: Demethylmenaquinone methyltransferase (233 aa).

Residues Thr-60, Asp-81, and 106-107 (DA) contribute to the S-adenosyl-L-methionine site.

The protein belongs to the class I-like SAM-binding methyltransferase superfamily. MenG/UbiE family.

The enzyme catalyses a 2-demethylmenaquinol + S-adenosyl-L-methionine = a menaquinol + S-adenosyl-L-homocysteine + H(+). It participates in quinol/quinone metabolism; menaquinone biosynthesis; menaquinol from 1,4-dihydroxy-2-naphthoate: step 2/2. Its function is as follows. Methyltransferase required for the conversion of demethylmenaquinol (DMKH2) to menaquinol (MKH2). The sequence is that of Demethylmenaquinone methyltransferase from Staphylococcus saprophyticus subsp. saprophyticus (strain ATCC 15305 / DSM 20229 / NCIMB 8711 / NCTC 7292 / S-41).